The primary structure comprises 282 residues: Pantothenate synthetase (282 aa).

Residue 30–37 (MGNLHQGH) participates in ATP binding. His37 functions as the Proton donor in the catalytic mechanism. Gln61 provides a ligand contact to (R)-pantoate. Residue Gln61 participates in beta-alanine binding. 149 to 152 (GKKD) is an ATP binding site. A (R)-pantoate-binding site is contributed by Gln155. ATP contacts are provided by residues Ile178 and 186 to 189 (MSSR).

It belongs to the pantothenate synthetase family. Homodimer.

Its subcellular location is the cytoplasm. It catalyses the reaction (R)-pantoate + beta-alanine + ATP = (R)-pantothenate + AMP + diphosphate + H(+). The protein operates within cofactor biosynthesis; (R)-pantothenate biosynthesis; (R)-pantothenate from (R)-pantoate and beta-alanine: step 1/1. Catalyzes the condensation of pantoate with beta-alanine in an ATP-dependent reaction via a pantoyl-adenylate intermediate. In Shewanella loihica (strain ATCC BAA-1088 / PV-4), this protein is Pantothenate synthetase.